Here is a 568-residue protein sequence, read N- to C-terminus: Potassium-transporting ATPase potassium-binding subunit (568 aa).

The next 11 membrane-spanning stretches (helical) occupy residues 6–26, 64–84, 135–155, 179–199, 254–274, 285–305, 382–402, 419–439, 459–481, 488–508, and 529–549; these read ILQILAFTAIIWALAKPIGGF, TGYAGSLLAFSLVSLLFTYLI, IALATHNFFSAAAGIAVAIAF, LYILLPMSLLAALFFCSQGVI, LANLAQMVLIFLIPAGLTYTF, WALLAAMTVLFLAGVCVVYPA, GLYGMLLFAILAVFIAGLMVG, MVMLSVLVLALCILGFSAAGI, VLYGYTSAAGNNGSAFAGLSANT, LGIAMLCGRFLMLIPLLAAAG, and LFVTLLVGVVVIVGALTFFPA.

Belongs to the KdpA family. The system is composed of three essential subunits: KdpA, KdpB and KdpC.

It localises to the cell inner membrane. In terms of biological role, part of the high-affinity ATP-driven potassium transport (or Kdp) system, which catalyzes the hydrolysis of ATP coupled with the electrogenic transport of potassium into the cytoplasm. This subunit binds the periplasmic potassium ions and delivers the ions to the membrane domain of KdpB through an intramembrane tunnel. The protein is Potassium-transporting ATPase potassium-binding subunit of Solibacter usitatus (strain Ellin6076).